The primary structure comprises 141 residues: Large ribosomal subunit protein uL11 (141 aa).

The protein belongs to the universal ribosomal protein uL11 family. In terms of assembly, part of the ribosomal stalk of the 50S ribosomal subunit. Interacts with L10 and the large rRNA to form the base of the stalk. L10 forms an elongated spine to which L12 dimers bind in a sequential fashion forming a multimeric L10(L12)X complex. Post-translationally, one or more lysine residues are methylated.

Functionally, forms part of the ribosomal stalk which helps the ribosome interact with GTP-bound translation factors. This Streptococcus thermophilus (strain CNRZ 1066) protein is Large ribosomal subunit protein uL11.